A 442-amino-acid chain; its full sequence is 26S proteasome non-ATPase regulatory subunit 12 homolog A (442 aa).

A coiled-coil region spans residues 6 to 137; sequence KLEATIDRLL…EAADLMQEVA (132 aa). Residues 232–403 form the PCI domain; the sequence is EICRSYKAIY…GIVCFQIAKD (172 aa).

This sequence belongs to the proteasome subunit p55 family. In terms of assembly, component of the 19S regulatory particle (RP/PA700) lid subcomplex of the 26S proteasome. The 26S proteasome is composed of a core protease (CP), known as the 20S proteasome, capped at one or both ends by the 19S regulatory particle (RP/PA700). The RP/PA700 complex is composed of at least 17 different subunits in two subcomplexes, the base and the lid, which form the portions proximal and distal to the 20S proteolytic core, respectively. In terms of tissue distribution, ubiquitous with highest expression in flowers.

Its subcellular location is the cytoplasm. The protein resides in the nucleus. In terms of biological role, acts as a regulatory subunit of the 26 proteasome which is involved in the ATP-dependent degradation of ubiquitinated proteins. Required for gametogenesis and sporophyte development. Acts redundantly with RPN5B. This chain is 26S proteasome non-ATPase regulatory subunit 12 homolog A (RPN5A), found in Arabidopsis thaliana (Mouse-ear cress).